Consider the following 145-residue polypeptide: MTEKSLKLFIVLSRAYRSINDHMNKHIHKHGLNPTEFAVLELLYHKGDQPLQQIGDKILLASGSITYVVDKLEQKELLIRKASPTDRRVTFAQITEKGIGLLNDIFPDHAAEIDEMISVLSEEEVEMCTEMLKRVGLNAKQFHNK.

The HTH marR-type domain maps to 5–137 (SLKLFIVLSR…CTEMLKRVGL (133 aa)). Residues 51 to 74 (LQQIGDKILLASGSITYVVDKLEQ) constitute a DNA-binding region (H-T-H motif).

Functionally, negatively regulates mhqA, mhqED, mhqNOP, and azoR2 which may contribute to the degradation of aromatic compounds. This chain is HTH-type transcriptional regulator MhqR (mhqR), found in Bacillus subtilis (strain 168).